We begin with the raw amino-acid sequence, 497 residues long: tRNA-2-methylthio-N(6)-dimethylallyladenosine synthase (497 aa).

The interval 1-48 (MTGTSNIPTHGKEHKDAPALLPLPAPNTHHTHAAHPGDPSHDRHPSRG) is disordered. Positions 18–28 (PALLPLPAPNT) are enriched in low complexity. Positions 48–165 (GKLFIKTHGC…LPDMIRARRE (118 aa)) constitute an MTTase N-terminal domain. [4Fe-4S] cluster contacts are provided by cysteine 57, cysteine 94, cysteine 128, cysteine 202, cysteine 206, and cysteine 209. Positions 188–430 (RAEGPSAFVS…QKHINAYAAD (243 aa)) constitute a Radical SAM core domain. Residues 433–496 (KRMIGTVQTV…TNSLRGRVHT (64 aa)) form the TRAM domain.

Belongs to the methylthiotransferase family. MiaB subfamily. In terms of assembly, monomer. The cofactor is [4Fe-4S] cluster.

It localises to the cytoplasm. The catalysed reaction is N(6)-dimethylallyladenosine(37) in tRNA + (sulfur carrier)-SH + AH2 + 2 S-adenosyl-L-methionine = 2-methylsulfanyl-N(6)-dimethylallyladenosine(37) in tRNA + (sulfur carrier)-H + 5'-deoxyadenosine + L-methionine + A + S-adenosyl-L-homocysteine + 2 H(+). Its function is as follows. Catalyzes the methylthiolation of N6-(dimethylallyl)adenosine (i(6)A), leading to the formation of 2-methylthio-N6-(dimethylallyl)adenosine (ms(2)i(6)A) at position 37 in tRNAs that read codons beginning with uridine. The polypeptide is tRNA-2-methylthio-N(6)-dimethylallyladenosine synthase (Xylella fastidiosa (strain M23)).